The chain runs to 135 residues: Retinol-binding protein 5 (135 aa).

The protein belongs to the calycin superfamily. Fatty-acid binding protein (FABP) family.

It localises to the cytoplasm. In terms of biological role, intracellular transport of retinol. The sequence is that of Retinol-binding protein 5 (RBP5) from Pongo abelii (Sumatran orangutan).